The chain runs to 314 residues: 4-hydroxy-3-methylbut-2-enyl diphosphate reductase (314 aa).

A [4Fe-4S] cluster-binding site is contributed by cysteine 12. Histidine 41 and histidine 74 together coordinate (2E)-4-hydroxy-3-methylbut-2-enyl diphosphate. Residues histidine 41 and histidine 74 each contribute to the dimethylallyl diphosphate site. 2 residues coordinate isopentenyl diphosphate: histidine 41 and histidine 74. Residue cysteine 96 participates in [4Fe-4S] cluster binding. Histidine 124 is a (2E)-4-hydroxy-3-methylbut-2-enyl diphosphate binding site. Position 124 (histidine 124) interacts with dimethylallyl diphosphate. Residue histidine 124 coordinates isopentenyl diphosphate. Catalysis depends on glutamate 126, which acts as the Proton donor. Threonine 167 contacts (2E)-4-hydroxy-3-methylbut-2-enyl diphosphate. Cysteine 197 lines the [4Fe-4S] cluster pocket. The (2E)-4-hydroxy-3-methylbut-2-enyl diphosphate site is built by serine 225, serine 226, asparagine 227, and serine 269. The dimethylallyl diphosphate site is built by serine 225, serine 226, asparagine 227, and serine 269. Positions 225, 226, 227, and 269 each coordinate isopentenyl diphosphate.

Belongs to the IspH family. Requires [4Fe-4S] cluster as cofactor.

It catalyses the reaction isopentenyl diphosphate + 2 oxidized [2Fe-2S]-[ferredoxin] + H2O = (2E)-4-hydroxy-3-methylbut-2-enyl diphosphate + 2 reduced [2Fe-2S]-[ferredoxin] + 2 H(+). It carries out the reaction dimethylallyl diphosphate + 2 oxidized [2Fe-2S]-[ferredoxin] + H2O = (2E)-4-hydroxy-3-methylbut-2-enyl diphosphate + 2 reduced [2Fe-2S]-[ferredoxin] + 2 H(+). Its pathway is isoprenoid biosynthesis; dimethylallyl diphosphate biosynthesis; dimethylallyl diphosphate from (2E)-4-hydroxy-3-methylbutenyl diphosphate: step 1/1. It functions in the pathway isoprenoid biosynthesis; isopentenyl diphosphate biosynthesis via DXP pathway; isopentenyl diphosphate from 1-deoxy-D-xylulose 5-phosphate: step 6/6. Catalyzes the conversion of 1-hydroxy-2-methyl-2-(E)-butenyl 4-diphosphate (HMBPP) into a mixture of isopentenyl diphosphate (IPP) and dimethylallyl diphosphate (DMAPP). Acts in the terminal step of the DOXP/MEP pathway for isoprenoid precursor biosynthesis. The protein is 4-hydroxy-3-methylbut-2-enyl diphosphate reductase of Aliivibrio fischeri (strain ATCC 700601 / ES114) (Vibrio fischeri).